Consider the following 666-residue polypeptide: uncharacterized protein (666 aa).

Belongs to the MG032/MG096/MG288 family.

This is an uncharacterized protein from Mycoplasma genitalium (strain ATCC 33530 / DSM 19775 / NCTC 10195 / G37) (Mycoplasmoides genitalium).